The chain runs to 119 residues: cAMP-responsive element-binding protein-like 2 (119 aa).

The tract at residues 1 to 23 (MDDSKIVAGKVKKPGKRGRKPAK) is disordered. The span at 10 to 21 (KVKKPGKRGRKP) shows a compositional bias: basic residues. Positions 23–86 (KIDLKAKLER…LAMDQGKIPS (64 aa)) constitute a bZIP domain. The basic motif stretch occupies residues 29 to 60 (KLERSRQSARECRARKKLRYQYLEELVSSKER). The interval 62-69 (ICALREEL) is leucine-zipper. The segment at 95-119 (DEQKTPQSCSNKTTKNSKYSSSSGI) is disordered. Residues 102-119 (SCSNKTTKNSKYSSSSGI) are compositionally biased toward low complexity.

The protein belongs to the bZIP family. ATF subfamily.

The protein localises to the nucleus. Functionally, probable regulator of creb1 transcriptional activity which is involved in adipose cells differentiation. May also play a regulatory role in the cell cycle. This is cAMP-responsive element-binding protein-like 2 (crebl2) from Danio rerio (Zebrafish).